A 142-amino-acid polypeptide reads, in one-letter code: Transcriptional regulator MraZ (142 aa).

SpoVT-AbrB domains are found at residues 5–47 (NYQH…TNQE) and 76–119 (SLTV…DINA).

Belongs to the MraZ family. Forms oligomers.

The protein resides in the cytoplasm. It localises to the nucleoid. The protein is Transcriptional regulator MraZ of Mycoplasmoides gallisepticum (strain R(low / passage 15 / clone 2)) (Mycoplasma gallisepticum).